We begin with the raw amino-acid sequence, 208 residues long: Protein GrpE (208 aa).

The span at 1–12 (MTNKDESVEKNT) shows a compositional bias: basic and acidic residues. Residues 1–59 (MTNKDESVEKNTESTVEETNIKQNIDDSVEQAEESKGHLQDEAIEETSDENVIEEIDPK) are disordered. Polar residues predominate over residues 13–23 (ESTVEETNIKQ). A compositionally biased stretch (acidic residues) spans 42 to 55 (EAIEETSDENVIEE).

This sequence belongs to the GrpE family. As to quaternary structure, homodimer.

It is found in the cytoplasm. In terms of biological role, participates actively in the response to hyperosmotic and heat shock by preventing the aggregation of stress-denatured proteins, in association with DnaK and GrpE. It is the nucleotide exchange factor for DnaK and may function as a thermosensor. Unfolded proteins bind initially to DnaJ; upon interaction with the DnaJ-bound protein, DnaK hydrolyzes its bound ATP, resulting in the formation of a stable complex. GrpE releases ADP from DnaK; ATP binding to DnaK triggers the release of the substrate protein, thus completing the reaction cycle. Several rounds of ATP-dependent interactions between DnaJ, DnaK and GrpE are required for fully efficient folding. The protein is Protein GrpE of Staphylococcus aureus (strain Mu3 / ATCC 700698).